Reading from the N-terminus, the 78-residue chain is NAD(P)H-quinone oxidoreductase subunit O (78 aa).

Belongs to the complex I NdhO subunit family. In terms of assembly, NDH-1 can be composed of about 15 different subunits; different subcomplexes with different compositions have been identified which probably have different functions.

It localises to the cellular thylakoid membrane. The enzyme catalyses a plastoquinone + NADH + (n+1) H(+)(in) = a plastoquinol + NAD(+) + n H(+)(out). The catalysed reaction is a plastoquinone + NADPH + (n+1) H(+)(in) = a plastoquinol + NADP(+) + n H(+)(out). Functionally, NDH-1 shuttles electrons from an unknown electron donor, via FMN and iron-sulfur (Fe-S) centers, to quinones in the respiratory and/or the photosynthetic chain. The immediate electron acceptor for the enzyme in this species is believed to be plastoquinone. Couples the redox reaction to proton translocation, and thus conserves the redox energy in a proton gradient. Cyanobacterial NDH-1 also plays a role in inorganic carbon-concentration. The polypeptide is NAD(P)H-quinone oxidoreductase subunit O (Prochlorococcus marinus (strain MIT 9215)).